The sequence spans 699 residues: DNA ligase (699 aa).

Positions 1-29 (MSDADVDAESNPYLRDPPTEFEPAESLSR) are disordered. NAD(+)-binding positions include 60 to 64 (DAAYD), 108 to 109 (SI), and Glu-137. The active-site N6-AMP-lysine intermediate is the Lys-139. Residues Arg-160, Glu-196, Lys-311, and Lys-335 each contribute to the NAD(+) site. Positions 425, 428, 441, and 447 each coordinate Zn(2+). The BRCT domain maps to 613–666 (SGGDELDGLTFVVTGTLAASRSDVTELVESHGGNVTGSVSGNTDYLVVGENPGR).

This sequence belongs to the NAD-dependent DNA ligase family. LigA subfamily. Mg(2+) is required as a cofactor. Mn(2+) serves as cofactor.

The catalysed reaction is NAD(+) + (deoxyribonucleotide)n-3'-hydroxyl + 5'-phospho-(deoxyribonucleotide)m = (deoxyribonucleotide)n+m + AMP + beta-nicotinamide D-nucleotide.. Displays maximal in vitro activity at high salt levels. DNA ligase that catalyzes the formation of phosphodiester linkages between 5'-phosphoryl and 3'-hydroxyl groups in double-stranded DNA using NAD as a coenzyme and as the energy source for the reaction. It is essential for DNA replication and repair of damaged DNA. This chain is DNA ligase, found in Haloferax volcanii (strain ATCC 29605 / DSM 3757 / JCM 8879 / NBRC 14742 / NCIMB 2012 / VKM B-1768 / DS2) (Halobacterium volcanii).